The following is a 69-amino-acid chain: MKTQFVILIVAVVLLQLIANSEAFLSTLWNAAKSIFGKRGLRNLDNLDDDIFEPEMSEADLRYLQDLLR.

Positions 1–23 (MKTQFVILIVAVVLLQLIANSEA) are cleaved as a signal peptide. Residue phenylalanine 36 is modified to Phenylalanine amide. The propeptide occupies 40–69 (GLRNLDNLDDDIFEPEMSEADLRYLQDLLR).

The protein belongs to the non-disulfide-bridged peptide (NDBP) superfamily. Short antimicrobial peptide (group 4) family. Expressed by the venom gland.

It is found in the secreted. It localises to the target cell membrane. Amphipathic peptide that shows antibacterial activities against both Gram-positive (MIC=10 uM, 20 uM and 20 uM against S.aureus, B.subtilis and S.agalactiae, respectively) and Gram-negative bacteria (MIC=20 uM, 10 uM, and 10 uM against E.coli, S.typhi, and P.aeruginosa, respectively). Is mildly hemolytic at its MIC range, but shows a strong cytotoxic activity at higher concentrations, reaching 84% lysis at 50 uM. The polypeptide is Amphipathic peptide CT2 (Vaejovis mexicanus smithi (Mexican scorpion)).